Here is a 339-residue protein sequence, read N- to C-terminus: tRNA N6-adenosine threonylcarbamoyltransferase (339 aa).

Positions 111 and 115 each coordinate Fe cation. Substrate-binding positions include 134-138 (LVSGG), Asp167, Gly180, and Asn272. Asp300 contributes to the Fe cation binding site.

The protein belongs to the KAE1 / TsaD family. Requires Fe(2+) as cofactor.

The protein resides in the cytoplasm. It catalyses the reaction L-threonylcarbamoyladenylate + adenosine(37) in tRNA = N(6)-L-threonylcarbamoyladenosine(37) in tRNA + AMP + H(+). Required for the formation of a threonylcarbamoyl group on adenosine at position 37 (t(6)A37) in tRNAs that read codons beginning with adenine. Is involved in the transfer of the threonylcarbamoyl moiety of threonylcarbamoyl-AMP (TC-AMP) to the N6 group of A37, together with TsaE and TsaB. TsaD likely plays a direct catalytic role in this reaction. In Vibrio vulnificus (strain YJ016), this protein is tRNA N6-adenosine threonylcarbamoyltransferase.